We begin with the raw amino-acid sequence, 140 residues long: Putative ABC transporter permease protein ORF1 (140 aa).

The region spanning 1–133 (DPNVAFYSVV…ITTAGIFAYF (133 aa)) is the ABC transmembrane type-1 domain. 3 helical membrane-spanning segments follow: residues 9–29 (VVAVICWQYIPFYMIFFIAAL), 65–85 (TACILSLIGSLKYFDLIYVMT), and 115–135 (TIASAMFLIITTAGIFAYFVT).

Belongs to the binding-protein-dependent transport system permease family. MalFG subfamily.

It is found in the cell membrane. In terms of biological role, may play a role in sugar transport. The polypeptide is Putative ABC transporter permease protein ORF1 (Caldicellulosiruptor sp. (strain Rt8B.4)).